A 311-amino-acid polypeptide reads, in one-letter code: Methionyl-tRNA formyltransferase (311 aa).

112 to 115 (SLLP) is a (6S)-5,6,7,8-tetrahydrofolate binding site.

The protein belongs to the Fmt family.

It carries out the reaction L-methionyl-tRNA(fMet) + (6R)-10-formyltetrahydrofolate = N-formyl-L-methionyl-tRNA(fMet) + (6S)-5,6,7,8-tetrahydrofolate + H(+). In terms of biological role, attaches a formyl group to the free amino group of methionyl-tRNA(fMet). The formyl group appears to play a dual role in the initiator identity of N-formylmethionyl-tRNA by promoting its recognition by IF2 and preventing the misappropriation of this tRNA by the elongation apparatus. This is Methionyl-tRNA formyltransferase from Geobacter metallireducens (strain ATCC 53774 / DSM 7210 / GS-15).